A 94-amino-acid polypeptide reads, in one-letter code: Co-chaperonin GroES (94 aa).

This sequence belongs to the GroES chaperonin family. Heptamer of 7 subunits arranged in a ring. Interacts with the chaperonin GroEL.

It localises to the cytoplasm. Functionally, together with the chaperonin GroEL, plays an essential role in assisting protein folding. The GroEL-GroES system forms a nano-cage that allows encapsulation of the non-native substrate proteins and provides a physical environment optimized to promote and accelerate protein folding. GroES binds to the apical surface of the GroEL ring, thereby capping the opening of the GroEL channel. The protein is Co-chaperonin GroES of Staphylococcus epidermidis (strain ATCC 35984 / DSM 28319 / BCRC 17069 / CCUG 31568 / BM 3577 / RP62A).